The primary structure comprises 515 residues: MSKNPYEIEIIQKTAPYHPDPTMIFNHLCASRPGTLLLETAEVNKKRDLESIMIIDSAMRISSEDNSVKLTPLSINGTDILSTLKKTIPKKIEIYEKNNSTILVFPKIKKNIDEDKKLFSLSVFDAFRLMIRIFENREKKSKAMFFGGLFSYDLISVFESLPKLKGNQKCSNFCFYLAETLLVLDHQKKTCLIQNSLFSKNLKERKRIKKRSVEIERKLNEKLKLIPKTKIKDINLTSNMNNFEYGTIIKKLQKLIQKGEIFQVVPSRKFYLPCPNPLSAYQKLKKSNPSPYMFFMQDQDFTLFGASPESSLKYDEKTRKIELYPIAGTRPRGKTEDGNLDLDLDSRIELEMRTNHKELAEHLMLVDLARNDLARICKPGSRYVSDLVRVDRYSHVMHLVSRVIGELREGLDALHAYASCMNMGTLTGAPKVRAMQLIAEHEGEKRGSYGGAIGYFTDLGNLDTCITIRSAYVEKQVATIQAGAGIVYNSIPENEVNESLNKAQAVINAIKNAHY.

L-tryptophan is bound by residues threonine 40 and 291–293 (PYM). 328-329 (GT) is a binding site for chorismate. Glutamate 361 is a Mg(2+) binding site. Residues tyrosine 449, arginine 469, 483–485 (GAG), and glycine 485 each bind chorismate. Position 498 (glutamate 498) interacts with Mg(2+).

Belongs to the anthranilate synthase component I family. As to quaternary structure, heterotetramer consisting of two non-identical subunits: a beta subunit (TrpG) and a large alpha subunit (TrpE). It depends on Mg(2+) as a cofactor.

It catalyses the reaction chorismate + L-glutamine = anthranilate + pyruvate + L-glutamate + H(+). It participates in amino-acid biosynthesis; L-tryptophan biosynthesis; L-tryptophan from chorismate: step 1/5. Feedback inhibited by tryptophan. Part of a heterotetrameric complex that catalyzes the two-step biosynthesis of anthranilate, an intermediate in the biosynthesis of L-tryptophan. In the first step, the glutamine-binding beta subunit (TrpG) of anthranilate synthase (AS) provides the glutamine amidotransferase activity which generates ammonia as a substrate that, along with chorismate, is used in the second step, catalyzed by the large alpha subunit of AS (TrpE) to produce anthranilate. In the absence of TrpG, TrpE can synthesize anthranilate directly from chorismate and high concentrations of ammonia. The protein is Anthranilate synthase component 1 (trpE) of Buchnera aphidicola subsp. Schizaphis graminum (strain Sg).